Consider the following 466-residue polypeptide: Adenosylhomocysteinase (466 aa).

Thr57, Asp132, and Glu192 together coordinate substrate. 193–195 (TTT) is an NAD(+) binding site. Lys222 and Asp226 together coordinate substrate. Residues Asn227, 256-261 (GYGDVG), Glu279, Asn314, 335-337 (IGH), and Asn380 each bind NAD(+).

Belongs to the adenosylhomocysteinase family. NAD(+) serves as cofactor.

It is found in the cytoplasm. It catalyses the reaction S-adenosyl-L-homocysteine + H2O = L-homocysteine + adenosine. Its pathway is amino-acid biosynthesis; L-homocysteine biosynthesis; L-homocysteine from S-adenosyl-L-homocysteine: step 1/1. May play a key role in the regulation of the intracellular concentration of adenosylhomocysteine. The sequence is that of Adenosylhomocysteinase from Mesorhizobium japonicum (strain LMG 29417 / CECT 9101 / MAFF 303099) (Mesorhizobium loti (strain MAFF 303099)).